The chain runs to 499 residues: Cytochrome P450 710A2 (499 aa).

The chain crosses the membrane as a helical span at residues 5–25; the sequence is VSIFASLAPYLVSALLLFFLI. C439 is a heme binding site.

Belongs to the cytochrome P450 family. It depends on heme as a cofactor. Expressed in the vascular tissues of roots, shoots, stems and leaves. Expressed in root tips, carpes, siliques and seeds.

Its subcellular location is the membrane. It carries out the reaction 5-dehydroepisterol + NADPH + O2 + H(+) = ergosta-5,7,22,24(28)-tetraen-3beta-ol + NADP(+) + 2 H2O. It functions in the pathway steroid biosynthesis; sterol biosynthesis. In terms of biological role, required to form the C-22 double bond in the sterol side chain. Possesses in vitro C-22 desaturase activity toward 24-epi-campesterol and beta-sitosterol and produces brassicasterol and stigmasterol, respectively. No activity with campesterol. The sequence is that of Cytochrome P450 710A2 from Arabidopsis thaliana (Mouse-ear cress).